Here is an 88-residue protein sequence, read N- to C-terminus: UPF0250 protein Shal_3239 (88 aa).

It belongs to the UPF0250 family.

The protein is UPF0250 protein Shal_3239 of Shewanella halifaxensis (strain HAW-EB4).